The following is a 75-amino-acid chain: Penaeidin-3k (75 aa).

Positions 1–19 (MRLVVCLVFLASFALVCQG) are cleaved as a signal peptide. At Gln-20 the chain carries Pyrrolidone carboxylic acid. Intrachain disulfides connect Cys-44-Cys-59, Cys-48-Cys-66, and Cys-60-Cys-67. Ser-74 is modified (serine amide).

It belongs to the penaeidin family.

The protein resides in the cytoplasmic granule. In terms of biological role, antibacterial and antifungal activity. Presents chitin-binding activity. In Penaeus setiferus (Atlantic white shrimp), this protein is Penaeidin-3k.